Reading from the N-terminus, the 631-residue chain is UvrABC system protein C (631 aa).

The GIY-YIG domain maps to 26-105 (SSPGVYQFKN…IKELKPRYNV (80 aa)). Positions 219–254 (SATIRSLNERMLSFAKELKFEQAAELKTQIDSLKRY) constitute a UVR domain.

Belongs to the UvrC family. In terms of assembly, interacts with UvrB in an incision complex.

The protein resides in the cytoplasm. In terms of biological role, the UvrABC repair system catalyzes the recognition and processing of DNA lesions. UvrC both incises the 5' and 3' sides of the lesion. The N-terminal half is responsible for the 3' incision and the C-terminal half is responsible for the 5' incision. The protein is UvrABC system protein C of Chlorobium phaeobacteroides (strain DSM 266 / SMG 266 / 2430).